Reading from the N-terminus, the 254-residue chain is 2,3-bisphosphoglycerate-dependent phosphoglycerate mutase (254 aa).

Residues 15–22, 28–29, arginine 67, 94–97, lysine 105, 121–122, and 188–189 contribute to the substrate site; these read RHGQSEWN, TG, ERHY, RR, and GN. Histidine 16 serves as the catalytic Tele-phosphohistidine intermediate. The active-site Proton donor/acceptor is glutamate 94.

The protein belongs to the phosphoglycerate mutase family. BPG-dependent PGAM subfamily.

It carries out the reaction (2R)-2-phosphoglycerate = (2R)-3-phosphoglycerate. It functions in the pathway carbohydrate degradation; glycolysis; pyruvate from D-glyceraldehyde 3-phosphate: step 3/5. Catalyzes the interconversion of 2-phosphoglycerate and 3-phosphoglycerate. This Corynebacterium jeikeium (strain K411) protein is 2,3-bisphosphoglycerate-dependent phosphoglycerate mutase.